The chain runs to 245 residues: Probable transcriptional regulatory protein pc1328 (245 aa).

The protein belongs to the TACO1 family.

It localises to the cytoplasm. This chain is Probable transcriptional regulatory protein pc1328, found in Protochlamydia amoebophila (strain UWE25).